Reading from the N-terminus, the 391-residue chain is MERVRGASSSDSVATLHGDHNYHCMATFKLDCTSARTRGVVSILEHRDPATVDDIFMQRVCHDINDVLRPVECLTSFPEYRRTLRVAVEAATELHGVSALSGQLTKFLEDHDGAMLPLAWPPNRYLRLTSGRKLGYLDVAEKLRKEYPMCNGPLEVLGVILGPGQSLYSDQHPVLLMGLTGTIFLHARGRPVWSPDYDPERDADRLFLAAESLQSFGREGLCRCDNVYTEDGGAPYATPEDPVLKNIVFTPHLGGKALHQQICKIKGHTWYLNGCPGMLKDRVFVATPDIPPFVRHVNLELFGHRFLPIGRVTRSPEDPECEMFIMVDAGGAIYGHMLDSGKVRRLADNFDQFMRMGTRRVISISRWLREVVSTPSTRRPRLGPRTTGSFS.

It belongs to the herpesviridae US22 family.

It localises to the host cytoplasm. It is found in the host nucleus. In terms of biological role, involved in the reactivation of latent MCMV in spleen cells. The polypeptide is Immediate-early protein 2 (IE2) (Murid herpesvirus 1 (strain Smith) (MuHV-1)).